Reading from the N-terminus, the 175-residue chain is Large ribosomal subunit protein uL6 (175 aa).

This sequence belongs to the universal ribosomal protein uL6 family. As to quaternary structure, part of the 50S ribosomal subunit.

Functionally, this protein binds to the 23S rRNA, and is important in its secondary structure. It is located near the subunit interface in the base of the L7/L12 stalk, and near the tRNA binding site of the peptidyltransferase center. In Xanthomonas axonopodis pv. citri (strain 306), this protein is Large ribosomal subunit protein uL6.